A 209-amino-acid chain; its full sequence is Ribosomal RNA large subunit methyltransferase E (209 aa).

Positions 63, 65, 83, 99, and 124 each coordinate S-adenosyl-L-methionine. Residue Lys-164 is the Proton acceptor of the active site.

It belongs to the class I-like SAM-binding methyltransferase superfamily. RNA methyltransferase RlmE family.

It localises to the cytoplasm. The enzyme catalyses uridine(2552) in 23S rRNA + S-adenosyl-L-methionine = 2'-O-methyluridine(2552) in 23S rRNA + S-adenosyl-L-homocysteine + H(+). Specifically methylates the uridine in position 2552 of 23S rRNA at the 2'-O position of the ribose in the fully assembled 50S ribosomal subunit. The protein is Ribosomal RNA large subunit methyltransferase E of Shewanella pealeana (strain ATCC 700345 / ANG-SQ1).